The following is a 149-amino-acid chain: D-aminoacyl-tRNA deacylase (149 aa).

Positions 139–140 (GP) match the Gly-cisPro motif, important for rejection of L-amino acids motif.

Belongs to the DTD family. As to quaternary structure, homodimer.

The protein resides in the cytoplasm. It carries out the reaction glycyl-tRNA(Ala) + H2O = tRNA(Ala) + glycine + H(+). The enzyme catalyses a D-aminoacyl-tRNA + H2O = a tRNA + a D-alpha-amino acid + H(+). In terms of biological role, an aminoacyl-tRNA editing enzyme that deacylates mischarged D-aminoacyl-tRNAs. Also deacylates mischarged glycyl-tRNA(Ala), protecting cells against glycine mischarging by AlaRS. Acts via tRNA-based rather than protein-based catalysis; rejects L-amino acids rather than detecting D-amino acids in the active site. By recycling D-aminoacyl-tRNA to D-amino acids and free tRNA molecules, this enzyme counteracts the toxicity associated with the formation of D-aminoacyl-tRNA entities in vivo and helps enforce protein L-homochirality. This chain is D-aminoacyl-tRNA deacylase (dtd1), found in Schizosaccharomyces pombe (strain 972 / ATCC 24843) (Fission yeast).